The chain runs to 423 residues: MDERFEIKDIVAREVIDSRGNPTVEVEVITKGNGYGSAIVPSGASTGTHEALELRDKEKRFGGKGVLMAVENVNSIIRPEILGYDARMQREIDTIMIELDGTPNKSRLGANAILAVSLAVAKAAAATAKIPLYKYLGGFNSYVMPVPMMNVINGGKHAGNDLDLQEFMIMPVGATSISEAVRMGSEVYHVLKNVILEKYGKNAVNVGDEGGFAPPLKTSREALDLLTESVKKAGYEDEVVFALDAAASEFYKDGYYYVEGKKLTREELLDYYKALVDEYPIVSIEDPFHEEDFEGFAMITKELDIQIVGDDLFVTNVERLRKGIEMKAANALLLKVNQIGTLSEAVDAAQLAFRNGYGVVVSHRSGETEDTTIADLSVALNSGQIKTGAPARGERTAKYNQLIRIEQELGLSKYAGRNFRCPF.

(2R)-2-phosphoglycerate is bound at residue Gln-165. The active-site Proton donor is Glu-209. 3 residues coordinate Mg(2+): Asp-244, Glu-285, and Asp-310. The (2R)-2-phosphoglycerate site is built by Lys-335, Arg-364, Ser-365, and Lys-386. The active-site Proton acceptor is the Lys-335.

Belongs to the enolase family. As to quaternary structure, homooctamer formed by a tetramer of dimers. Mg(2+) is required as a cofactor.

Its subcellular location is the cytoplasm. The protein resides in the secreted. It localises to the cell surface. The enzyme catalyses (2R)-2-phosphoglycerate = phosphoenolpyruvate + H2O. It functions in the pathway carbohydrate degradation; glycolysis; pyruvate from D-glyceraldehyde 3-phosphate: step 4/5. The covalent binding to the substrate causes inactivation of the enzyme, and possibly serves as a signal for the export of the protein. Catalyzes the reversible conversion of 2-phosphoglycerate (2-PG) into phosphoenolpyruvate (PEP). It is essential for the degradation of carbohydrates via glycolysis. This Methanocaldococcus jannaschii (strain ATCC 43067 / DSM 2661 / JAL-1 / JCM 10045 / NBRC 100440) (Methanococcus jannaschii) protein is Enolase.